The chain runs to 279 residues: NADPH-dependent 7-cyano-7-deazaguanine reductase (279 aa).

A substrate-binding site is contributed by 86 to 88; it reads IES. 88–89 is a binding site for NADPH; that stretch reads SK. Cys-187 serves as the catalytic Thioimide intermediate. Asp-194 functions as the Proton donor in the catalytic mechanism. 226–227 is a binding site for substrate; it reads HE. An NADPH-binding site is contributed by 255-256; sequence RG.

Belongs to the GTP cyclohydrolase I family. QueF type 2 subfamily. In terms of assembly, homodimer.

It localises to the cytoplasm. It carries out the reaction 7-aminomethyl-7-carbaguanine + 2 NADP(+) = 7-cyano-7-deazaguanine + 2 NADPH + 3 H(+). Its pathway is tRNA modification; tRNA-queuosine biosynthesis. Catalyzes the NADPH-dependent reduction of 7-cyano-7-deazaguanine (preQ0) to 7-aminomethyl-7-deazaguanine (preQ1). This chain is NADPH-dependent 7-cyano-7-deazaguanine reductase, found in Histophilus somni (strain 129Pt) (Haemophilus somnus).